The primary structure comprises 379 residues: Glutamate 5-kinase (379 aa).

Lys-19 contacts ATP. Substrate is bound by residues Ser-59, Asp-146, and Asn-158. 178 to 179 (TD) lines the ATP pocket. The PUA domain occupies 285–363 (RGAVTVDAGA…SEFERLLGYV (79 aa)).

It belongs to the glutamate 5-kinase family.

It localises to the cytoplasm. The catalysed reaction is L-glutamate + ATP = L-glutamyl 5-phosphate + ADP. It functions in the pathway amino-acid biosynthesis; L-proline biosynthesis; L-glutamate 5-semialdehyde from L-glutamate: step 1/2. Functionally, catalyzes the transfer of a phosphate group to glutamate to form L-glutamate 5-phosphate. The sequence is that of Glutamate 5-kinase from Variovorax paradoxus (strain S110).